A 217-amino-acid polypeptide reads, in one-letter code: U2 snRNP component ist3 (217 aa).

An RRM domain is found at A31–S109. 2 disordered regions span residues P119–N138 and E154–G217. The span at S128 to N138 shows a compositional bias: polar residues. A Phosphoserine modification is found at S160. Basic and acidic residues-rich tracts occupy residues P161–H176 and H185–R198. Residues H199 to G217 show a composition bias toward basic residues.

This sequence belongs to the IST3 family. In terms of assembly, belongs to the 40S cdc5-associated complex (or cwf complex), a spliceosome sub-complex reminiscent of a late-stage spliceosome composed of the U2, U5 and U6 snRNAs and at least brr2, cdc5, cwf2/prp3, cwf3/syf1, cwf4/syf3, cwf5/ecm2, spp42/cwf6, cwf7/spf27, cwf8, cwf9, cwf10, cwf11, cwf12, prp45/cwf13, cwf14, cwf15, cwf16, cwf17, cwf18, cwf19, cwf20, cwf21, cwf22, cwf23, cwf24, cwf25, cwf26, cyp7/cwf27, cwf28, cwf29/ist3, lea1, msl1, prp5/cwf1, prp10, prp12/sap130, prp17, prp22, sap61, sap62, sap114, sap145, slu7, smb1, smd1, smd3, smf1, smg1 and syf2.

It is found in the nucleus. Required for pre-mRNA splicing and spliceosome assembly. This Schizosaccharomyces pombe (strain 972 / ATCC 24843) (Fission yeast) protein is U2 snRNP component ist3 (cwf29).